A 180-amino-acid polypeptide reads, in one-letter code: Urease accessory protein UreE (180 aa).

The tract at residues 71 to 90 (AAPSGAGHGDGEQDGTGAPG) is disordered.

It belongs to the UreE family.

It localises to the cytoplasm. In terms of biological role, involved in urease metallocenter assembly. Binds nickel. Probably functions as a nickel donor during metallocenter assembly. This is Urease accessory protein UreE from Kocuria rhizophila (strain ATCC 9341 / DSM 348 / NBRC 103217 / DC2201).